A 398-amino-acid polypeptide reads, in one-letter code: Mannitol-1-phosphate 5-dehydrogenase (398 aa).

10–21 is a binding site for NAD(+); it reads AVHFGAGNIGRG. Residue Lys221 is part of the active site.

It belongs to the mannitol dehydrogenase family. As to quaternary structure, monomer.

It catalyses the reaction D-mannitol 1-phosphate + NAD(+) = beta-D-fructose 6-phosphate + NADH + H(+). Functionally, catalyzes the NAD(H)-dependent interconversion of D-fructose 6-phosphate and D-mannitol 1-phosphate in the mannitol metabolic pathway. The chain is Mannitol-1-phosphate 5-dehydrogenase from Neurospora crassa (strain ATCC 24698 / 74-OR23-1A / CBS 708.71 / DSM 1257 / FGSC 987).